An 84-amino-acid polypeptide reads, in one-letter code: Putative defensin-like protein 165 (84 aa).

Positions Met1–Ala27 are cleaved as a signal peptide. 4 disulfides stabilise this stretch: Cys31-Cys78, Cys41-Cys60, Cys46-Cys72, and Cys50-Cys74.

Belongs to the DEFL family.

The protein resides in the secreted. This Arabidopsis thaliana (Mouse-ear cress) protein is Putative defensin-like protein 165 (LCR12).